Reading from the N-terminus, the 312-residue chain is Large ribosomal subunit protein uL10 (312 aa).

Lysine 14 participates in a covalent cross-link: Glycyl lysine isopeptide (Lys-Gly) (interchain with G-Cter in ubiquitin). Position 68 is a phosphoserine (serine 68). Residues lysine 97 and lysine 144 each participate in a glycyl lysine isopeptide (Lys-Gly) (interchain with G-Cter in ubiquitin) cross-link. Residues 199-230 (SSILDITDEELVSHFVSAVSTIASISLAIGYP) form an interaction with P1A-P2B region. The interaction with P1B-P2A stretch occupies residues 231–258 (TLPSVGHTLINNYKDLLAVAIAASYHYP). A compositionally biased stretch (low complexity) spans 278–293 (PAATSAASGDAAPAEE). A disordered region spans residues 278–312 (PAATSAASGDAAPAEEAAAEEEEESDDDMGFGLFD). Residues 294–306 (AAAEEEEESDDDM) are compositionally biased toward acidic residues. A Phosphoserine; by CK2 modification is found at serine 302.

The protein belongs to the universal ribosomal protein uL10 family. As to quaternary structure, component of the large ribosomal subunit (LSU). Mature yeast ribosomes consist of a small (40S) and a large (60S) subunit. The 40S small subunit contains 1 molecule of ribosomal RNA (18S rRNA) and 33 different proteins (encoded by 57 genes). The large 60S subunit contains 3 rRNA molecules (25S, 5.8S and 5S rRNA) and 46 different proteins (encoded by 81 genes). The 5 acidic ribosomal P-proteins form the stalk structure of the 60S subunit. They are organized as a pentameric complex in which uL10/P0 interacts with 2 heterodimers, P1A-P2B and P1B-P2A. uL10 directly interacts with 28S rRNA. uL10 interacts with YFL034W.

The protein localises to the cytoplasm. Its function is as follows. Component of the ribosome, a large ribonucleoprotein complex responsible for the synthesis of proteins in the cell. The small ribosomal subunit (SSU) binds messenger RNAs (mRNAs) and translates the encoded message by selecting cognate aminoacyl-transfer RNA (tRNA) molecules. The large subunit (LSU) contains the ribosomal catalytic site termed the peptidyl transferase center (PTC), which catalyzes the formation of peptide bonds, thereby polymerizing the amino acids delivered by tRNAs into a polypeptide chain. The nascent polypeptides leave the ribosome through a tunnel in the LSU and interact with protein factors that function in enzymatic processing, targeting, and the membrane insertion of nascent chains at the exit of the ribosomal tunnel. uL10 forms part of the P stalk that participates in recruiting G proteins to the ribosome. The sequence is that of Large ribosomal subunit protein uL10 from Saccharomyces cerevisiae (strain ATCC 204508 / S288c) (Baker's yeast).